Reading from the N-terminus, the 535-residue chain is MKKNLTWKVVVIVAVLLVFAFGIIGNPAEVKWDKEGLKTALMNRIHLGLDLRGGTHLILQVVVNDAVNAETDRAIERIKEDLANNKVTYSDITKPDAANAPERIAIKGITPDGATTLRRVSDERLPEYSFGSGPEGSYTLTMKPAQLKDLKDRAVQQAIQKIRERVDSLGVSEPVIQEHGLGDYQILVQLPGVDDPARVKEVMQSTAMLEIRQVFGGPYSKESEAAQGQMQQPDTVVLPGKSESDPGTQVFYLVARSSAVAGHDLRQARVGRDQNGGANVQFNLTRDGGVRFSQFTSAHVGDKLGVILDGKVMEVANIKSEISDSGEIEGRFTDQQASDLALILNSGALPASIKYLEERTVGPSLGMDSIRQGVRAAIIGFVAVIIFMLIYYKGAGINADLSLLLNLVILLGFMGYFGAVLTLPGIAGVILTVGMGVDSNVLIFERIREELRNGKTPPSAVEQGFGHAWLTIIDTHVTTIVSAIILFLFGTGPVKGFAVTLSFGLFANLFTAVFVSRVIFDSILNRHQRGEALSI.

The next 6 helical transmembrane spans lie at 5-25 (LTWK…GIIG), 377-397 (AIIG…GAGI), 402-421 (SLLL…GAVL), 425-444 (GIAG…VLIF), 469-489 (WLTI…LFLF), and 496-516 (GFAV…VFVS).

The protein belongs to the SecD/SecF family. SecD subfamily. As to quaternary structure, forms a complex with SecF. Part of the essential Sec protein translocation apparatus which comprises SecA, SecYEG and auxiliary proteins SecDF. Other proteins may also be involved.

It localises to the cell inner membrane. Its function is as follows. Part of the Sec protein translocase complex. Interacts with the SecYEG preprotein conducting channel. SecDF uses the proton motive force (PMF) to complete protein translocation after the ATP-dependent function of SecA. The polypeptide is Protein translocase subunit SecD (Koribacter versatilis (strain Ellin345)).